The primary structure comprises 495 residues: Histidine--tRNA ligase (495 aa).

This sequence belongs to the class-II aminoacyl-tRNA synthetase family. Homodimer.

It is found in the cytoplasm. It catalyses the reaction tRNA(His) + L-histidine + ATP = L-histidyl-tRNA(His) + AMP + diphosphate + H(+). In Ruegeria pomeroyi (strain ATCC 700808 / DSM 15171 / DSS-3) (Silicibacter pomeroyi), this protein is Histidine--tRNA ligase.